We begin with the raw amino-acid sequence, 824 residues long: AMP deaminase 2 (824 aa).

The segment at 1–43 (MASYPGPGKSKAKYPFKKRASLQASAAAPEARSGLGASPLQSA) is disordered. A compositionally biased stretch (basic residues) spans 10–20 (SKAKYPFKKRA). Residue S21 is modified to Phosphoserine. The span at 21-33 (SLQASAAAPEARS) shows a compositional bias: low complexity. R44 bears the Omega-N-methylarginine mark. Phosphoserine is present on residues S45, S63, and S79. Y90 carries the phosphotyrosine modification. Phosphoserine occurs at positions 96 and 113. T133 carries the post-translational modification Phosphothreonine. 2 positions are modified to phosphoserine: S135 and S137. The Zn(2+) site is built by H364 and H366. Substrate contacts are provided by residues H366 and 435–440 (KFNAKY). H633 contacts Zn(2+). E636 contacts substrate. The active-site Proton acceptor is the H655. D710 contacts Zn(2+). Position 711–714 (711–714 (DPLQ)) interacts with substrate.

The protein belongs to the metallo-dependent hydrolases superfamily. Adenosine and AMP deaminases family. In terms of assembly, homotetramer. Requires Zn(2+) as cofactor.

It catalyses the reaction AMP + H2O + H(+) = IMP + NH4(+). The protein operates within purine metabolism; IMP biosynthesis via salvage pathway; IMP from AMP: step 1/1. In terms of biological role, AMP deaminase plays a critical role in energy metabolism. Catalyzes the deamination of AMP to IMP and plays an important role in the purine nucleotide cycle. The polypeptide is AMP deaminase 2 (Rattus norvegicus (Rat)).